Consider the following 246-residue polypeptide: Carboxy-S-adenosyl-L-methionine synthase (246 aa).

S-adenosyl-L-methionine contacts are provided by residues Tyr39, 64-66 (GCS), 89-90 (DN), 117-118 (DI), Asn132, and Arg199.

This sequence belongs to the class I-like SAM-binding methyltransferase superfamily. Cx-SAM synthase family. In terms of assembly, homodimer.

It carries out the reaction prephenate + S-adenosyl-L-methionine = carboxy-S-adenosyl-L-methionine + 3-phenylpyruvate + H2O. Its function is as follows. Catalyzes the conversion of S-adenosyl-L-methionine (SAM) to carboxy-S-adenosyl-L-methionine (Cx-SAM). In Enterobacter sp. (strain 638), this protein is Carboxy-S-adenosyl-L-methionine synthase.